The following is a 390-amino-acid chain: Aspergillopepsin-1 (390 aa).

Residues 1-19 (MVNTSLLAALTAYAVAVSA) form the signal peptide. Residues 20–67 (APTAPQVKGFSVNQVAVPKGVYRHPAAQLAKAYGKYHATVPTQVAAAA) constitute a propeptide, activation peptide. An O-linked (Man...) threonine glycan is attached at T70. In terms of domain architecture, Peptidase A1 spans 84 to 387 (YITQVTVGDD…DASGPRLGFA (304 aa)). Residues D100 and D281 contribute to the active site.

It belongs to the peptidase A1 family.

It is found in the secreted. It carries out the reaction Hydrolysis of proteins with broad specificity. Generally favors hydrophobic residues in P1 and P1', but also accepts Lys in P1, which leads to activation of trypsinogen. Does not clot milk.. Inhibited by the microbial peptide pepstatin. Secreted aspartic endopeptidase that allows assimilation of proteinaceous substrates. The scissile peptide bond is attacked by a nucleophilic water molecule activated by two aspartic residues in the active site. Shows a broad primary substrate specificity. Favors hydrophobic residues at the P1 and P1' positions, but also accepts a lysine residue in the P1 position, leading to the activation of trypsinogen and chymotrypsinogen A. The chain is Aspergillopepsin-1 (pepA) from Aspergillus oryzae (Yellow koji mold).